We begin with the raw amino-acid sequence, 427 residues long: Serine--tRNA ligase 2 (427 aa).

The segment covering 35-53 has biased composition (basic and acidic residues); it reads RRRSEAQAEVTRLRTELNR. Positions 35 to 72 are disordered; sequence RRRSEAQAEVTRLRTELNRTSRARGRSGPPSEEEKEAA. 230-232 contacts L-serine; that stretch reads TAE. 261–263 lines the ATP pocket; the sequence is RAE. Residue glutamate 284 coordinates L-serine. 348–351 is an ATP binding site; it reads EISS. L-serine is bound at residue serine 383.

Belongs to the class-II aminoacyl-tRNA synthetase family. Type-1 seryl-tRNA synthetase subfamily. Homodimer. The tRNA molecule binds across the dimer.

The protein resides in the cytoplasm. The enzyme catalyses tRNA(Ser) + L-serine + ATP = L-seryl-tRNA(Ser) + AMP + diphosphate + H(+). It catalyses the reaction tRNA(Sec) + L-serine + ATP = L-seryl-tRNA(Sec) + AMP + diphosphate + H(+). It functions in the pathway aminoacyl-tRNA biosynthesis; selenocysteinyl-tRNA(Sec) biosynthesis; L-seryl-tRNA(Sec) from L-serine and tRNA(Sec): step 1/1. Catalyzes the attachment of serine to tRNA(Ser). Is also able to aminoacylate tRNA(Sec) with serine, to form the misacylated tRNA L-seryl-tRNA(Sec), which will be further converted into selenocysteinyl-tRNA(Sec). This chain is Serine--tRNA ligase 2, found in Streptomyces avermitilis (strain ATCC 31267 / DSM 46492 / JCM 5070 / NBRC 14893 / NCIMB 12804 / NRRL 8165 / MA-4680).